The primary structure comprises 320 residues: Pyrroline-5-carboxylate reductase 2 (320 aa).

S2 is subject to N-acetylserine. NADP(+) contacts are provided by residues 6 to 11 (IGAGQL) and S34. Positions 8, 10, 11, 34, 36, 56, 70, 71, and 97 each coordinate NADPH. NADP(+)-binding positions include N56, 69–72 (AVKP), and 95–97 (CAA). E164 contributes to the L-proline binding site. N230 serves as a coordination point for NADPH. L-proline contacts are provided by A237 and T238. Positions 293 to 320 (ESPTVSTLAPPSSGKLLTRNPAQGSKRE) are disordered. A Phosphoserine modification is found at S304.

Belongs to the pyrroline-5-carboxylate reductase family. In terms of assembly, homodecamer; composed of 5 homodimers. Interacts with LTO1.

Its subcellular location is the cytoplasm. It localises to the mitochondrion. The catalysed reaction is L-proline + NADP(+) = (S)-1-pyrroline-5-carboxylate + NADPH + 2 H(+). The enzyme catalyses L-proline + NAD(+) = (S)-1-pyrroline-5-carboxylate + NADH + 2 H(+). It functions in the pathway amino-acid biosynthesis; L-proline biosynthesis; L-proline from L-glutamate 5-semialdehyde: step 1/1. Oxidoreductase that catalyzes the last step in proline biosynthesis, which corresponds to the reduction of pyrroline-5-carboxylate to L-proline using NAD(P)H. At physiologic concentrations, has higher specific activity in the presence of NADH. Involved in cellular response to oxidative stress. In some cell types, such as erythrocytes, its primary function may be the generation of NADP(+). The chain is Pyrroline-5-carboxylate reductase 2 from Rattus norvegicus (Rat).